Consider the following 2285-residue polypeptide: Protein Ycf2 (2285 aa).

Gly1638–Ser1645 provides a ligand contact to ATP.

The protein belongs to the Ycf2 family.

The protein resides in the plastid. It localises to the chloroplast stroma. Functionally, probable ATPase of unknown function. Its presence in a non-photosynthetic plant (Epifagus virginiana) and experiments in tobacco indicate that it has an essential function which is probably not related to photosynthesis. The chain is Protein Ycf2 from Populus trichocarpa (Western balsam poplar).